The chain runs to 357 residues: MQPTVLLILMTSCLTYQVIADKPKGNHLHSRPERSPIVLFSDAPHAAASPADENDNFPVLKTANQYEDNNSATFSHLEEKHDFAEKQSTGDDEESVILNRVTGEVLSDTVDGSQGHLEPKRFNEFVGKRNTLPEEAGSFDADSQPGSLDTVRILAGLSNFGQPQIIDQGNMKNHRTLKNMIHNLYNTMNEDEASKRQYEFVGKRSYDFVGKRTYDFLGKRSPYYFLGKRYDFIGKRSPYDFIGKKNYDFVGKRSPYDFVGKRNQGVFTVSPSSTKISFDDNYLPYLSSVDAGDLSDVNKRYAEFLGKRKRTAEQDETSQRSNERLVALLQNTGFRKRLSRMLQNQRLVEHYPEFIGK.

Positions Met1 to Gln17 are cleaved as a signal peptide. The propeptide occupies Val18 to Pro119. Asn123 bears the D-asparagine mark. At Val126 the chain carries Valine amide. The propeptide occupies Asn130–Ser194. Valine amide is present on residues Val201 and Val209. A leucine amide mark is found at Leu217 and Leu226. Isoleucine amide is present on residues Ile233 and Ile242. Val250 and Val259 each carry valine amide. The propeptide occupies Asn263–Asn298. Residue Leu305 is modified to Leucine amide. The propeptide occupies Thr311 to Lys357.

As to expression, found in central ganglia and the ventricles and atria of the heart.

In terms of biological role, potentiates tetanic contraction of the penis retractor muscle at very low concentrations, and also shows modulatory actions on the activity of the buccal and ventricular muscles and the central ganglionic neurons. In Lissachatina fulica (Giant African land snail), this protein is Fulicin peptides.